A 204-amino-acid chain; its full sequence is Large ribosomal subunit protein eL15 (204 aa).

Belongs to the eukaryotic ribosomal protein eL15 family. In terms of assembly, component of the large ribosomal subunit.

The protein localises to the cytoplasm. Its function is as follows. Component of the large ribosomal subunit. The ribosome is a large ribonucleoprotein complex responsible for the synthesis of proteins in the cell. This Hypophthalmichthys molitrix (Silver carp) protein is Large ribosomal subunit protein eL15 (rpl15).